We begin with the raw amino-acid sequence, 72 residues long: Large ribosomal subunit protein bL31c (72 aa).

This sequence belongs to the bacterial ribosomal protein bL31 family. Type A subfamily. Part of the 50S ribosomal subunit.

Its subcellular location is the plastid. It is found in the chloroplast. In terms of biological role, binds the 23S rRNA. The chain is Large ribosomal subunit protein bL31c (rpl31) from Thalassiosira pseudonana (Marine diatom).